Reading from the N-terminus, the 100-residue chain is Urease subunit gamma (100 aa).

This sequence belongs to the urease gamma subunit family. Heterotrimer of UreA (gamma), UreB (beta) and UreC (alpha) subunits. Three heterotrimers associate to form the active enzyme.

The protein localises to the cytoplasm. It catalyses the reaction urea + 2 H2O + H(+) = hydrogencarbonate + 2 NH4(+). It functions in the pathway nitrogen metabolism; urea degradation; CO(2) and NH(3) from urea (urease route): step 1/1. The polypeptide is Urease subunit gamma (Synechococcus sp. (strain CC9605)).